The primary structure comprises 472 residues: Ribulose bisphosphate carboxylase large chain (472 aa).

Substrate-binding residues include Asn-115 and Thr-165. Lys-167 acts as the Proton acceptor in catalysis. Substrate is bound at residue Lys-169. Mg(2+) contacts are provided by Lys-193, Asp-195, and Glu-196. Lys-193 is subject to N6-carboxylysine. The Proton acceptor role is filled by His-286. Substrate is bound by residues Arg-287, His-319, and Ser-371.

Belongs to the RuBisCO large chain family. Type I subfamily. In terms of assembly, heterohexadecamer of 8 large chains and 8 small chains. Mg(2+) serves as cofactor.

The catalysed reaction is 2 (2R)-3-phosphoglycerate + 2 H(+) = D-ribulose 1,5-bisphosphate + CO2 + H2O. It catalyses the reaction D-ribulose 1,5-bisphosphate + O2 = 2-phosphoglycolate + (2R)-3-phosphoglycerate + 2 H(+). In terms of biological role, ruBisCO catalyzes two reactions: the carboxylation of D-ribulose 1,5-bisphosphate, the primary event in carbon dioxide fixation, as well as the oxidative fragmentation of the pentose substrate. Both reactions occur simultaneously and in competition at the same active site. In Solemya velum gill symbiont, this protein is Ribulose bisphosphate carboxylase large chain.